A 123-amino-acid polypeptide reads, in one-letter code: Zinc metalloproteinase-disintegrin-like jerdohagin (123 aa).

The 47-residue stretch at arginine 6–glutamate 52 folds into the Peptidase M12B domain. Zn(2+) is bound at residue histidine 12. An intrachain disulfide couples cysteine 19 to cysteine 24. Positions 48 and 51 each coordinate Ca(2+). Positions leucine 53–asparagine 80 constitute a Disintegrin domain. Intrachain disulfides connect cysteine 59/cysteine 65, cysteine 64/cysteine 78, cysteine 72/cysteine 90, and cysteine 106/cysteine 116. The short motif at glutamate 71–aspartate 73 is the D/ECD-tripeptide element.

The protein belongs to the venom metalloproteinase (M12B) family. P-III subfamily. P-IIIa sub-subfamily. Monomer. Zn(2+) serves as cofactor. In terms of processing, the N-terminus is blocked. As to expression, expressed by the venom gland.

It localises to the secreted. With respect to regulation, its proteolytic and hemorrhagic activities are inhibited by EDTA, but not by PMSF. Functionally, snake venom metalloproteinase that has high hemorrhagic activity and degrades the alpha-chain of fibrinogen (FGA), leaving the beta- and the gamma-chain intact. It may also inhibit platelet aggregation. Cleaves insulin B chain at '25-Phe-|-Val-26', '26-Val-|-Asn-27', '29-His-|-Leu-30', '30-Leu-|-Cys-31', '33-Ser-|-His-34', '35-Leu-|-Val-36', '40-Tyr-|-Leu-41', '41-Leu-|-Val-42', '42-Val-|-Cys-43', '43-Cys-|-Gly-44', '44-Gly-|-Glu-45', '46-Arg-|-Gly-47', '47-Gly-|-Phe-48', '49-Phe-|-Tyr-50' and '52-Pro-|-Lys-53' bonds. Also cleaves human prothrombin (72 kDa) and activation fragment F1 (27 kDa) of activated human prothrombin, to generate two new proteins of 68 and 23 kDa. The sequence is that of Zinc metalloproteinase-disintegrin-like jerdohagin from Protobothrops jerdonii (Jerdon's pitviper).